Reading from the N-terminus, the 297-residue chain is Ribosomal protein L11 methyltransferase (297 aa).

Positions 152, 173, 195, and 234 each coordinate S-adenosyl-L-methionine.

It belongs to the methyltransferase superfamily. PrmA family.

The protein localises to the cytoplasm. The catalysed reaction is L-lysyl-[protein] + 3 S-adenosyl-L-methionine = N(6),N(6),N(6)-trimethyl-L-lysyl-[protein] + 3 S-adenosyl-L-homocysteine + 3 H(+). Methylates ribosomal protein L11. The sequence is that of Ribosomal protein L11 methyltransferase from Cupriavidus pinatubonensis (strain JMP 134 / LMG 1197) (Cupriavidus necator (strain JMP 134)).